The chain runs to 231 residues: Putative N-acetylmannosamine-6-phosphate 2-epimerase (231 aa).

This sequence belongs to the NanE family.

The enzyme catalyses an N-acyl-D-glucosamine 6-phosphate = an N-acyl-D-mannosamine 6-phosphate. Its pathway is amino-sugar metabolism; N-acetylneuraminate degradation; D-fructose 6-phosphate from N-acetylneuraminate: step 3/5. In terms of biological role, converts N-acetylmannosamine-6-phosphate (ManNAc-6-P) to N-acetylglucosamine-6-phosphate (GlcNAc-6-P). The sequence is that of Putative N-acetylmannosamine-6-phosphate 2-epimerase from Latilactobacillus sakei subsp. sakei (strain 23K) (Lactobacillus sakei subsp. sakei).